The following is a 408-amino-acid chain: 3-phosphoshikimate 1-carboxyvinyltransferase (408 aa).

Residues Lys10, Ser11, and Arg15 each coordinate 3-phosphoshikimate. Residue Lys10 coordinates phosphoenolpyruvate. 2 residues coordinate phosphoenolpyruvate: Gly79 and Arg107. Positions 150, 151, 152, 179, 297, and 324 each coordinate 3-phosphoshikimate. A phosphoenolpyruvate-binding site is contributed by Gln152. Glu297 functions as the Proton acceptor in the catalytic mechanism. Residues Arg328, Arg369, and Lys394 each coordinate phosphoenolpyruvate.

Belongs to the EPSP synthase family. Monomer.

The protein resides in the cytoplasm. The catalysed reaction is 3-phosphoshikimate + phosphoenolpyruvate = 5-O-(1-carboxyvinyl)-3-phosphoshikimate + phosphate. It participates in metabolic intermediate biosynthesis; chorismate biosynthesis; chorismate from D-erythrose 4-phosphate and phosphoenolpyruvate: step 6/7. In terms of biological role, catalyzes the transfer of the enolpyruvyl moiety of phosphoenolpyruvate (PEP) to the 5-hydroxyl of shikimate-3-phosphate (S3P) to produce enolpyruvyl shikimate-3-phosphate and inorganic phosphate. This Corynebacterium efficiens (strain DSM 44549 / YS-314 / AJ 12310 / JCM 11189 / NBRC 100395) protein is 3-phosphoshikimate 1-carboxyvinyltransferase.